The primary structure comprises 87 residues: Small ribosomal subunit protein uS17 (87 aa).

This sequence belongs to the universal ribosomal protein uS17 family. As to quaternary structure, part of the 30S ribosomal subunit.

One of the primary rRNA binding proteins, it binds specifically to the 5'-end of 16S ribosomal RNA. The chain is Small ribosomal subunit protein uS17 from Alkalilimnicola ehrlichii (strain ATCC BAA-1101 / DSM 17681 / MLHE-1).